The sequence spans 30 residues: 80 kDa carcinoembryonic antigen-binding protein (30 aa).

As to quaternary structure, binds to carcinoembryonic antigen (CEA). The N-terminus is blocked.

The protein resides in the cell membrane. Functionally, may play a role in the development of hepatic metastases from colorectal cancers. In Rattus norvegicus (Rat), this protein is 80 kDa carcinoembryonic antigen-binding protein.